The chain runs to 142 residues: Organic hydroperoxide resistance protein-like 2 (142 aa).

It belongs to the OsmC/Ohr family.

The sequence is that of Organic hydroperoxide resistance protein-like 2 from Staphylococcus epidermidis (strain ATCC 12228 / FDA PCI 1200).